The following is a 357-amino-acid chain: S-adenosylmethionine:tRNA ribosyltransferase-isomerase (357 aa).

The protein belongs to the QueA family. In terms of assembly, monomer.

It localises to the cytoplasm. It carries out the reaction 7-aminomethyl-7-carbaguanosine(34) in tRNA + S-adenosyl-L-methionine = epoxyqueuosine(34) in tRNA + adenine + L-methionine + 2 H(+). The protein operates within tRNA modification; tRNA-queuosine biosynthesis. In terms of biological role, transfers and isomerizes the ribose moiety from AdoMet to the 7-aminomethyl group of 7-deazaguanine (preQ1-tRNA) to give epoxyqueuosine (oQ-tRNA). The polypeptide is S-adenosylmethionine:tRNA ribosyltransferase-isomerase (Buchnera aphidicola subsp. Schizaphis graminum (strain Sg)).